A 413-amino-acid chain; its full sequence is Alpha-1-antitrypsin 1-4 (413 aa).

A signal peptide spans 1–24 (MTPSISWSLLLLAGLCCLVPSFLA). Residues Asn64, Asn101, and Asn265 are each glycosylated (N-linked (GlcNAc...) asparagine). The segment at 368–387 (AATVLQVATYSMPPIVRFDH) is RCL.

It belongs to the serpin family.

It is found in the secreted. Inhibitor of serine proteases. Can inhibit trypsin and chymotrypsin; relatively ineffective against elastase. This is Alpha-1-antitrypsin 1-4 (Serpina1d) from Mus musculus (Mouse).